The primary structure comprises 424 residues: O-methyltransferase aunD (424 aa).

Aspartate 275 is an S-adenosyl-L-methionine binding site. The active-site Proton acceptor is the histidine 326.

Belongs to the class I-like SAM-binding methyltransferase superfamily. Cation-independent O-methyltransferase family.

Its pathway is secondary metabolite biosynthesis. Functionally, O-methyltransferase; part of the gene cluster that mediates the biosynthesis of aurasperone B, a dimeric gamma-naphthopyrone. The first step in the biosynthesis of aurasperone B is the production of gamma-naphthopyrone precursor YWA1 by the non-reducing polyketide synthase albA, via condensation of one acetyl-CoA starter unit with 6 malonyl-CoA units. YWA1 is then methylated by aunE at position C-6 to yield foncesin which is further methylated at position C-8 by aunD to produce fonsecin B. A key enzyme in the biosynthetic pathway is the cytochrome P450 monooxygenase aunB which catalyzes the oxidative dimerization of fonsecin B to aurasperone B. AunB also catalyzes the oxidative dimerization of rubrofusarin B into aurasperone A. The protein is O-methyltransferase aunD of Aspergillus niger (strain ATCC MYA-4892 / CBS 513.88 / FGSC A1513).